A 1601-amino-acid polypeptide reads, in one-letter code: PH and SEC7 domain-containing protein (1601 aa).

Residues 1–340 (MSEELKVVLR…TGDLILNLSR (340 aa)) form a mediates regulation of axon branching and microtubule organization region. The 83-residue stretch at 6–88 (KVVLRRSEQH…LVTLELKRDP (83 aa)) folds into the PDZ domain. 7 disordered regions span residues 113 to 192 (NIYD…SSTK), 211 to 322 (TSPT…PAKA), 339 to 440 (SRTP…SLTN), 459 to 657 (LEED…SSSG), 737 to 780 (NSSL…SETA), 872 to 965 (QQQQ…LLSC), and 1040 to 1126 (QQLK…SDVE). Residues 118–128 (HSSSTNSSPNH) show a composition bias toward polar residues. Residues 166–191 (ASGSTTTTTTATHTHSHSRNSSASST) show a composition bias toward low complexity. Over residues 283-297 (QSLQHSNSYSGSPVT) the composition is skewed to polar residues. Basic and acidic residues predominate over residues 300-311 (RFADREPEREPE). Residues 323–340 (PRFEAYMMTGDLILNLSR) carry the Microtubule elimination domain (MTED); Binds tubulin and blocks microtubule polymerization motif. Over residues 339 to 348 (SRTPQTSNPL) the composition is skewed to polar residues. Over residues 353-362 (KKIDSLRDSP) the composition is skewed to basic and acidic residues. 3 stretches are compositionally biased toward low complexity: residues 382-399 (SSPTSSSSVDSPTNTSSD), 409-424 (QKQQQQQQQTYQQQQQ), and 468-487 (QRQQQQRYRQQQNQQRYEYY). The span at 488–505 (QNEDELEEQEEVEEEREE) shows a compositional bias: acidic residues. Positions 510-519 (YDITNIETYQ) are enriched in polar residues. Positions 526-557 (DDDDSDRQCLVDDDDDDDAYDDEENDAGDEDY) are enriched in acidic residues. Composition is skewed to polar residues over residues 558-567 (STNSLGSGSA) and 617-630 (TSFSVPTSPISLST). A compositionally biased stretch (low complexity) spans 640–657 (SVPTSPEPSSLVPESSSG). Over residues 737-747 (NSSLASNNNEG) the composition is skewed to polar residues. 4 stretches are compositionally biased toward low complexity: residues 752-780 (NRSSSSSSNSSDNNNCSSNTGEPATSETA), 872-942 (QQQQ…QQQQ), 949-965 (GGQVAQPPSGIPGLLSC), and 1040-1052 (QQLKQQLRAQQQQ). Residues 894–1601 (SSSPQHSAVG…PTNRKEKKKK (708 aa)) are mediates association to the membrane and rescricts the microtubule-inhibiting activity to the cell cortex. The span at 1053–1071 (QRERERDRDRDREQSEHKV) shows a compositional bias: basic and acidic residues. Residues 1125-1291 (VESLHSYHYS…KSLYQAIKTK (167 aa)) form the SEC7 domain. Residues 1332–1445 (VEYKKGYVMR…WVETINYVCA (114 aa)) form the PH domain. The segment at 1544–1601 (LELQAQQPSPASHEEEADTFPVGTTACTPPTPQSINQKDQQKEQQQQQPTNRKEKKKK) is disordered. The span at 1568 to 1579 (TACTPPTPQSIN) shows a compositional bias: polar residues.

This sequence belongs to the PSD family. As to quaternary structure, interacts (via MTED motif) with tubulin. As to expression, expressed in the head (at protein level).

It is found in the cell projection. The protein localises to the axon. Its subcellular location is the cytoplasm. It localises to the cell membrane. The protein resides in the cell cortex. In terms of biological role, guanine nucleotide exchange factor for Arf6. Regulates axon growth and branching by inhibiting microtubule polymerisation at the cortex. Together with shot, promotes axonal microtubule bundle integrity. Required for normal ethanol-induced tolerance and preference. Probably by activating Arf6, counteracts ethanol-induced sedation. This Drosophila melanogaster (Fruit fly) protein is PH and SEC7 domain-containing protein.